We begin with the raw amino-acid sequence, 277 residues long: 3-methyl-2-oxobutanoate hydroxymethyltransferase (277 aa).

Mg(2+) is bound by residues Asp43 and Asp82. 3-methyl-2-oxobutanoate contacts are provided by residues 43–44 (DS), Asp82, and Lys112. Residue Glu114 participates in Mg(2+) binding. The active-site Proton acceptor is the Glu181.

Belongs to the PanB family. In terms of assembly, homodecamer; pentamer of dimers. Mg(2+) serves as cofactor.

It localises to the cytoplasm. The catalysed reaction is 3-methyl-2-oxobutanoate + (6R)-5,10-methylene-5,6,7,8-tetrahydrofolate + H2O = 2-dehydropantoate + (6S)-5,6,7,8-tetrahydrofolate. It participates in cofactor biosynthesis; (R)-pantothenate biosynthesis; (R)-pantoate from 3-methyl-2-oxobutanoate: step 1/2. Its function is as follows. Catalyzes the reversible reaction in which hydroxymethyl group from 5,10-methylenetetrahydrofolate is transferred onto alpha-ketoisovalerate to form ketopantoate. In Bacillus velezensis (strain DSM 23117 / BGSC 10A6 / LMG 26770 / FZB42) (Bacillus amyloliquefaciens subsp. plantarum), this protein is 3-methyl-2-oxobutanoate hydroxymethyltransferase.